We begin with the raw amino-acid sequence, 352 residues long: MQRYPTKQIKIRDVLIGGDAPISVQSMTFSKTKDVKGTLEQIQRLYFAGCDIVRCAVFDKEDASALKQIVAGSPIPVVADIHFNHTYALIVSEFVDAIRINPGNIGSAKNIKAVVDACKQRNLPIRIGVNSGSLEKRFEDRYGRTVEAMVESALYNIKLLEDFDFTDIKISLKSSDVERTMQAYRALRPKTNYPFHLGVTEAGTAFHATIKSAIALGGLLLEGIGDTMRVSITGELEEEIKVAKAILKDSGRQKEGLNIISCPTCGRLQADLMAAVKLVEEKTKDIKEPLNVSVMGCVVNAIGEAKGADVAIAFGKGNGMIMRHGEVVARLPESELVDRFLQEIDDEIKSRG.

Residues Cys262, Cys265, Cys297, and Glu304 each coordinate [4Fe-4S] cluster.

The protein belongs to the IspG family. It depends on [4Fe-4S] cluster as a cofactor.

It catalyses the reaction (2E)-4-hydroxy-3-methylbut-2-enyl diphosphate + oxidized [flavodoxin] + H2O + 2 H(+) = 2-C-methyl-D-erythritol 2,4-cyclic diphosphate + reduced [flavodoxin]. It participates in isoprenoid biosynthesis; isopentenyl diphosphate biosynthesis via DXP pathway; isopentenyl diphosphate from 1-deoxy-D-xylulose 5-phosphate: step 5/6. In terms of biological role, converts 2C-methyl-D-erythritol 2,4-cyclodiphosphate (ME-2,4cPP) into 1-hydroxy-2-methyl-2-(E)-butenyl 4-diphosphate. The sequence is that of 4-hydroxy-3-methylbut-2-en-1-yl diphosphate synthase (flavodoxin) from Campylobacter concisus (strain 13826).